We begin with the raw amino-acid sequence, 892 residues long: Translation initiation factor IF-2 (892 aa).

The segment at 88–305 (KKRTFVKRDP…SLQQGFQKPA (218 aa)) is disordered. 2 stretches are compositionally biased toward basic and acidic residues: residues 93 to 159 (VKRD…KDKV) and 166 to 216 (DMTK…EENK). Residues 254-269 (GRGRNAKAARPAKKGK) are compositionally biased toward basic residues. Positions 270–282 (HAESKADREEARA) are enriched in basic and acidic residues. Residues 391 to 560 (PRAPVVTIMG…LLQAEVLELK (170 aa)) enclose the tr-type G domain. The G1 stretch occupies residues 400–407 (GHVDHGKT). A GTP-binding site is contributed by 400-407 (GHVDHGKT). Positions 425-429 (GITQH) are G2. The tract at residues 446–449 (DTPG) is G3. Residues 446-450 (DTPGH) and 500-503 (NKID) contribute to the GTP site. Positions 500 to 503 (NKID) are G4. Residues 536–538 (SAK) are G5.

It belongs to the TRAFAC class translation factor GTPase superfamily. Classic translation factor GTPase family. IF-2 subfamily.

The protein localises to the cytoplasm. Its function is as follows. One of the essential components for the initiation of protein synthesis. Protects formylmethionyl-tRNA from spontaneous hydrolysis and promotes its binding to the 30S ribosomal subunits. Also involved in the hydrolysis of GTP during the formation of the 70S ribosomal complex. The polypeptide is Translation initiation factor IF-2 (Salmonella paratyphi A (strain ATCC 9150 / SARB42)).